A 327-amino-acid polypeptide reads, in one-letter code: Succinylglutamate desuccinylase (327 aa).

Zn(2+)-binding residues include H53, E56, and H146. The active site involves E209.

This sequence belongs to the AspA/AstE family. Succinylglutamate desuccinylase subfamily. Zn(2+) is required as a cofactor.

It catalyses the reaction N-succinyl-L-glutamate + H2O = L-glutamate + succinate. It participates in amino-acid degradation; L-arginine degradation via AST pathway; L-glutamate and succinate from L-arginine: step 5/5. Its function is as follows. Transforms N(2)-succinylglutamate into succinate and glutamate. The sequence is that of Succinylglutamate desuccinylase from Serratia proteamaculans (strain 568).